The following is a 644-amino-acid chain: MNIIEIKQLNRYFGEGENRVHVLKDISLSIERGDFVAIMGQSGSGKSTLMNIIGCLDTATGGSSKIDGKETIELTNDQLSDLRSQKFGFIFQRYNLLSSLTAAENVALPAIYAGMPQSQRLERAKQLLEKLGLGDKWQNKPNQLSGGQQQRVSIARALMNGGEIILADEPTGALDSHSGENVMEILRQLHEEGHTIIMVTHDKHIAASANRIIEIKDGEIISDTQKRQVKSAVKNPSVFKGRFGFSKDQLMEAFRMSVSAIVAHKMRSLLTMLGIIIGITSVVSVVALGNGSQQKILENIRGIGTNTMTIFNGNGFGDRRSRHIQNLKISDANTLSKQSYIQSVTPNTSSSGILVVGNKSFTSANLYGIGEQYFDVEGLKLKQGRLLTEDDVDQSNQVVVLDESAKKAIFANENPLGKTVIFNKRPFRVIGVVSDQQLGGFPGNSLNLYSPYSTVLNKITGGSRIGSITVKISDDVNSTVAEKSLTELLKSLHGKKDFFIMNSDTIKQTIENTTGTMKLLISSIAFISLIVGGIGVMNIMLVSVTERTKEIGVRMAIGARQINILQQFLIEAVLICLIGGVAGILLSVLIGVLFNSFITDFSMDFSTASIVTAVLFSTLIGVLFGYMPAKKAAELNPITALAQE.

The Cytoplasmic portion of the chain corresponds to M1–S268. Residues I4–R242 enclose the ABC transporter domain. G40–S47 lines the ATP pocket. A helical transmembrane segment spans residues L269 to G289. Topologically, residues N290–S523 are periplasmic. A helical membrane pass occupies residues I524–V544. Residues T545–V573 lie on the Cytoplasmic side of the membrane. A helical transmembrane segment spans residues L574–F594. The Periplasmic segment spans residues N595–T607. A helical membrane pass occupies residues A608–P628. At A629–E644 the chain is on the cytoplasmic side.

It belongs to the ABC transporter superfamily. Macrolide exporter (TC 3.A.1.122) family. As to quaternary structure, homodimer. Part of the tripartite efflux system MacAB-TdeA, which is composed of an inner membrane transporter, MacB, a periplasmic membrane fusion protein, MacA, and an outer membrane component, TdeA. The complex forms a large protein conduit and can translocate molecules across both the inner and outer membranes. Interacts with MacA.

The protein resides in the cell inner membrane. Its function is as follows. Part of the tripartite efflux system MacAB-TdeA. MacB is a non-canonical ABC transporter that contains transmembrane domains (TMD), which form a pore in the inner membrane, and an ATP-binding domain (NBD), which is responsible for energy generation. Confers resistance against macrolides. The chain is Macrolide export ATP-binding/permease protein MacB from Aggregatibacter actinomycetemcomitans (Actinobacillus actinomycetemcomitans).